Reading from the N-terminus, the 368-residue chain is HECT-type ubiquitin ligase-interacting protein apyA (368 aa).

The protein belongs to the arrestin family. As to quaternary structure, interacts with hulA.

May be involved in signaling by recognizing appropriately phosphorylated substrates via its arrestin domains and then recruit a HECT-type ubiquitin ligase such as hulA, leading to ubiquitination of the substrate, providing a link between ubiquitination and phosphorylation in protein regulation and stability. The polypeptide is HECT-type ubiquitin ligase-interacting protein apyA (apyA) (Emericella nidulans (strain FGSC A4 / ATCC 38163 / CBS 112.46 / NRRL 194 / M139) (Aspergillus nidulans)).